Reading from the N-terminus, the 130-residue chain is Large ribosomal subunit protein bL17 (130 aa).

Belongs to the bacterial ribosomal protein bL17 family. As to quaternary structure, part of the 50S ribosomal subunit. Contacts protein L32.

The sequence is that of Large ribosomal subunit protein bL17 from Photorhabdus laumondii subsp. laumondii (strain DSM 15139 / CIP 105565 / TT01) (Photorhabdus luminescens subsp. laumondii).